Reading from the N-terminus, the 350-residue chain is MLTQRQKKILQAIVRQYTSTGQPVGSKHLAEKLPFKVSSATVRNEMAVLEDNDLILKEHSSSGRIPSKRGYRYYVDNLLDPQAVTDNDLVVIQNSLGNGFQKIDEIISHSADILSNLTSYTAFTLKPEQESVRLSGFRVVPLGNHKVIAILVTDSGEVENQSFTLPPDIDTDAMQAVIRMINDQLVGLPLSEVVKRLKDDIPLQVLHYMHSPDGFLDIFDNVLSQAARERFFVGGRLNLLDFASTHDPHAIQSLYGLLDKNDNLSNILDSTLTSDNGVNVKIGQEISKNKLLDDYSLITASYNVEQYGRGIIAVLGPTRMPYSRTIGIVNAFRQELAKRLLDFYRHYYDS.

It belongs to the HrcA family.

Its function is as follows. Negative regulator of class I heat shock genes (grpE-dnaK-dnaJ and groELS operons). Prevents heat-shock induction of these operons. This chain is Heat-inducible transcription repressor HrcA, found in Limosilactobacillus reuteri (strain DSM 20016) (Lactobacillus reuteri).